The sequence spans 203 residues: Sperm-specific protein PHI-2B/PHI-3 (203 aa).

Positions 1–35 (MPSPSRKSRSRSRSRSKSPKRSPAKKARKTPKKPR) are enriched in basic residues. Disordered regions lie at residues 1–46 (MPSP…PSTL) and 104–203 (KTSA…KSKK). Residues 41–120 (KKPSTLSMIV…GATGSFRVGK (80 aa)) form the H15 domain. Composition is skewed to basic residues over residues 126-140 (KKAK…KSSK) and 147-203 (KAKK…KSKK).

PL-II* and PL-IV are produced by post-translational cleavage of a common precursor. As to expression, sperm.

It localises to the nucleus. It is found in the chromosome. Linker histones are implicated in chromatin remodeling and/or transcriptional regulation during spermiogenesis, the process of spermatid maturation into spermatozoa. Protamines substitute for histones in the chromatin of sperm during the haploid phase of spermatogenesis. They compact sperm DNA into a highly condensed, stable and inactive complex. This chain is Sperm-specific protein PHI-2B/PHI-3, found in Mytilus trossulus (Blue mussel).